Reading from the N-terminus, the 195-residue chain is Imidazoleglycerol-phosphate dehydratase (195 aa).

The protein belongs to the imidazoleglycerol-phosphate dehydratase family.

It is found in the cytoplasm. The enzyme catalyses D-erythro-1-(imidazol-4-yl)glycerol 3-phosphate = 3-(imidazol-4-yl)-2-oxopropyl phosphate + H2O. It functions in the pathway amino-acid biosynthesis; L-histidine biosynthesis; L-histidine from 5-phospho-alpha-D-ribose 1-diphosphate: step 6/9. This chain is Imidazoleglycerol-phosphate dehydratase, found in Ruegeria pomeroyi (strain ATCC 700808 / DSM 15171 / DSS-3) (Silicibacter pomeroyi).